The following is a 602-amino-acid chain: Elongation factor 4 (602 aa).

In terms of domain architecture, tr-type G spans 5 to 187; it reads DHIRNFAIIA…QIIVSLPAPE (183 aa). Residues 17-22 and 134-137 each bind GTP; these read DHGKST and NKVD.

The protein belongs to the TRAFAC class translation factor GTPase superfamily. Classic translation factor GTPase family. LepA subfamily.

Its subcellular location is the cell inner membrane. The enzyme catalyses GTP + H2O = GDP + phosphate + H(+). Its function is as follows. Required for accurate and efficient protein synthesis under certain stress conditions. May act as a fidelity factor of the translation reaction, by catalyzing a one-codon backward translocation of tRNAs on improperly translocated ribosomes. Back-translocation proceeds from a post-translocation (POST) complex to a pre-translocation (PRE) complex, thus giving elongation factor G a second chance to translocate the tRNAs correctly. Binds to ribosomes in a GTP-dependent manner. This chain is Elongation factor 4, found in Pelagibacter ubique (strain HTCC1062).